Here is a 367-residue protein sequence, read N- to C-terminus: Probable butyrate kinase (367 aa).

Belongs to the acetokinase family.

Its subcellular location is the cytoplasm. The catalysed reaction is butanoate + ATP = butanoyl phosphate + ADP. The chain is Probable butyrate kinase from Bacillus cereus (strain ZK / E33L).